The following is a 1767-amino-acid chain: Endo-alpha-N-acetylgalactosaminidase (1767 aa).

The signal sequence occupies residues 1–39 (MNKGLFEKRCKYSIRKFSLGVASVMIGAAFFGTSPVLAD). 2 stretches are compositionally biased toward basic and acidic residues: residues 61–75 (KENDGRDFEAPKVGE) and 84–111 (DGPKTEEELLALEKEKPAEEKPKEDKPA). 2 disordered regions span residues 61 to 124 (KEND…VTPE) and 301 to 324 (VKTDNQEGVKTEDTPAEKETGPEV). Low complexity predominate over residues 112 to 124 (AAKPETPKTVTPE). Residues 304-324 (DNQEGVKTEDTPAEKETGPEV) show a composition bias toward basic and acidic residues. Ca(2+) is bound by residues aspartate 577, asparagine 579, aspartate 581, asparagine 583, and aspartate 588. Residues 602 to 893 (GWEKVKDITA…DVMTKYFQHF (292 aa)) form a catalytic region. Substrate is bound at residue aspartate 658. Catalysis depends on aspartate 764, which acts as the Nucleophile. Residue glutamate 796 is the Proton donor/acceptor of the active site. Ca(2+)-binding residues include aspartate 1233, glutamate 1235, glutamate 1281, tryptophan 1284, and aspartate 1411. The interval 1711–1730 (LASEQGKTPDYKQEIARPET) is disordered. A compositionally biased stretch (basic and acidic residues) spans 1717-1730 (KTPDYKQEIARPET). Positions 1735 to 1739 (LPATG) match the LPXTG sorting signal motif. Residue threonine 1738 is modified to Pentaglycyl murein peptidoglycan amidated threonine. The propeptide at 1739–1767 (GESQSDTALILASVSLALSALFVVKTKKD) is removed by sortase.

It belongs to the glycosyl hydrolase 101 family. A subfamily.

It localises to the secreted. The protein localises to the cell wall. The catalysed reaction is a 3-O-[beta-D-galactosyl-(1-&gt;3)-N-acetyl-alpha-D-galactosaminyl]-L-threonyl-[protein] + H2O = beta-D-galactosyl-(1-&gt;3)-N-acetyl-D-galactosamine + L-threonyl-[protein]. It carries out the reaction a 3-O-[beta-D-galactosyl-(1-&gt;3)-N-acetyl-alpha-D-galactosaminyl]-L-seryl-[protein] + H2O = beta-D-galactosyl-(1-&gt;3)-N-acetyl-D-galactosamine + L-seryl-[protein]. Its function is as follows. Involved in the breakdown of mucin-type O-linked glycans. Specifically removes the T-antigen disaccharide (Gal-beta-1,3-GalNAc-alpha) from extracellular host glycoproteins. Representative of a broadly important class of virulence factors. The protein is Endo-alpha-N-acetylgalactosaminidase of Streptococcus pneumoniae serotype 4 (strain ATCC BAA-334 / TIGR4).